The sequence spans 2110 residues: Tenascin (2110 aa).

Positions 1-22 (MGAVTWLLPGIFLALFALTPEG) are cleaved as a signal peptide. Residue Asn38 is glycosylated (N-linked (GlcNAc...) asparagine). Ser65, Ser70, and Ser72 each carry phosphoserine. The tract at residues 69-91 (ESASGEKDLTPTPESSGSFQEHT) is disordered. The O-linked (Xyl...) (chondroitin sulfate) serine glycan is linked to Ser72. A compositionally biased stretch (polar residues) spans 80-89 (TPESSGSFQE). Residues 118–142 (DVKELLSRLEELELLVSSLREQCTM) adopt a coiled-coil conformation. 2 N-linked (GlcNAc...) asparagine glycosylation sites follow: Asn166 and Asn184. The EGF-like 1; incomplete domain occupies 174–185 (CVCEPGWKGPNC). EGF-like domains lie at 186–216 (SEPDCPGNCNLRGQCLDGQCICDEGFTGEDC), 217–247 (SQLACPNDCNDQGRCVNGVCVCFEGYAGPDC), 248–279 (GLEVCPVPCSEEHGMCVDGRCVCKDGFAGEDC), 280–310 (NEPLCLNNCYNRGRCVENECVCDEGFTGEDC), 311–341 (SELICPNDCFDRGRCINGTCYCEEGFTGEDC), 342–372 (GELTCPNDCQGRGQCEEGQCVCNEGFAGADC), 373–403 (SEKRCPADCHHRGRCLNGQCECDDGFTGADC), 404–434 (GDLQCPNGCSGHGRCVNGQCVCDEGYTGEDC), 435–465 (SQRRCPNDCHNRGLCVQGKCICEQGFKGFDC), 466–496 (SEMSCPNDCHQHGRCVNGMCICDDDYTGEDC), 497–527 (RDRRCPRDCSQRGRCVDGQCICEDGFTGPDC), 528–558 (AELSCPSDCHGHGRCVNGQCICHEGFTGKDC), 559–589 (KEQRCPSDCHGQGRCEDGQCICHEGFTGLDC), and 590–621 (GQRSCPNDCSNQGQCVSGRCICNEGYTGIDCS). 42 cysteine pairs are disulfide-bonded: Cys190-Cys200, Cys194-Cys205, Cys207-Cys216, Cys221-Cys231, Cys225-Cys236, Cys238-Cys247, Cys252-Cys263, Cys256-Cys268, Cys270-Cys279, Cys284-Cys294, Cys288-Cys299, Cys301-Cys310, Cys315-Cys325, Cys319-Cys330, Cys332-Cys341, Cys346-Cys356, Cys350-Cys361, Cys363-Cys372, Cys377-Cys387, Cys381-Cys392, Cys394-Cys403, Cys408-Cys418, Cys412-Cys423, Cys425-Cys434, Cys439-Cys449, Cys443-Cys454, Cys456-Cys465, Cys470-Cys480, Cys474-Cys485, Cys487-Cys496, Cys501-Cys511, Cys505-Cys516, Cys518-Cys527, Cys532-Cys542, Cys536-Cys547, Cys549-Cys558, Cys563-Cys573, Cys567-Cys578, Cys580-Cys589, Cys594-Cys604, Cys598-Cys609, and Cys611-Cys620. Asn327 carries an N-linked (GlcNAc...) asparagine glycan. Fibronectin type-III domains are found at residues 625–715 (PPKD…LPAP), 716–804 (EGLK…TRLD), 805–894 (APSH…TGLD), 895–988 (APRN…IDAP), 989–1077 (KDLR…VPSL), 1078–1165 (ENLT…TGTT), 1167–1259 (NLGE…LPQL), 1260–1348 (GGLS…AREP), 1349–1440 (EIGN…ALPL), 1442–1530 (ENLT…EAEP), 1531–1620 (EVDN…TAMG), 1621–1710 (SPKE…ALDG), 1711–1797 (PSGL…TDLD), and 1798–1886 (SPRE…IGLL). Residue Asn788 is glycosylated (N-linked (GlcNAc...) asparagine). At Thr905 the chain carries Phosphothreonine. Asn1018, Asn1079, Asn1093, Asn1119, Asn1184, Asn1210, Asn1275, Asn1301, Asn1354, Asn1364, Asn1394, and Asn1443 each carry an N-linked (GlcNAc...) asparagine glycan. The N-linked (GlcNAc...) asparagine glycan is linked to Asn1718. Residues 1884–2099 (GLLYPFPRDC…FAEMKLRPSN (216 aa)) enclose the Fibrinogen C-terminal domain. N-linked (GlcNAc...) asparagine glycans are attached at residues Asn1969 and Asn2071.

It belongs to the tenascin family. As to quaternary structure, homohexamer; disulfide-linked. A homotrimer may be formed in the triple coiled-coil region and may be stabilized by disulfide rings at both ends. Two of such half-hexabrachions may be disulfide linked within the central globule. Interacts with CSPG4. Interacts (via the 3rd fibronectin type-III domain) with integrin ITGA9:ITGB1. Post-translationally, N-glycosylated. Expressed in the corneal limbus, the periosteum and the rib molecular layer of the cerebellum, the matrix of kidney tubules, blood vessels, stomach and intestine (at protein level). As to expression, weakly expressed in the brain. In terms of tissue distribution, highly expressed in the thymus and moderately expressed in the brain.

Its subcellular location is the secreted. The protein resides in the extracellular space. It is found in the extracellular matrix. Functionally, extracellular matrix protein implicated in guidance of migrating neurons as well as axons during development, synaptic plasticity as well as neuronal regeneration. Promotes neurite outgrowth when provided to neurons in culture. May play a role in supporting the growth of epithelial tumors. Ligand for integrins ITGA8:ITGB1, ITGA9:ITGB1, ITGAV:ITGB3 and ITGAV:ITGB6. In tumors, stimulates angiogenesis by elongation, migration and sprouting of endothelial cells. The chain is Tenascin from Mus musculus (Mouse).